The sequence spans 78 residues: U7-lycotoxin-Ls1d (78 aa).

The first 22 residues, 1-22, serve as a signal peptide directing secretion; sequence MKLIIFTGLALLLIVSLIDVEA. Positions 23 to 26 are excised as a propeptide; sequence QNEG.

The protein belongs to the neurotoxin 19 (CSTX) family. 07 (U7-Lctx) subfamily. Post-translationally, contains 4 disulfide bonds. Expressed by the venom gland.

Its subcellular location is the secreted. This Lycosa singoriensis (Wolf spider) protein is U7-lycotoxin-Ls1d.